The sequence spans 661 residues: UvrABC system protein C (661 aa).

Residues 26-105 (AEPGCYLMRD…IKNHQPHFNV (80 aa)) enclose the GIY-YIG domain. Residues 215–250 (DELQNLLQEQMHKYADRTDYESAARVRDQLQGLDQL) form the UVR domain.

The protein belongs to the UvrC family. In terms of assembly, interacts with UvrB in an incision complex.

It is found in the cytoplasm. In terms of biological role, the UvrABC repair system catalyzes the recognition and processing of DNA lesions. UvrC both incises the 5' and 3' sides of the lesion. The N-terminal half is responsible for the 3' incision and the C-terminal half is responsible for the 5' incision. In Synechococcus sp. (strain CC9902), this protein is UvrABC system protein C.